Consider the following 340-residue polypeptide: Fructose-1,6-bisphosphatase class 1 (340 aa).

The Mg(2+) site is built by E107, D126, L128, and D129. N215 provides a ligand contact to substrate. E287 lines the Mg(2+) pocket.

The protein belongs to the FBPase class 1 family. Homotetramer. It depends on Mg(2+) as a cofactor.

The protein localises to the cytoplasm. The enzyme catalyses beta-D-fructose 1,6-bisphosphate + H2O = beta-D-fructose 6-phosphate + phosphate. It functions in the pathway carbohydrate biosynthesis; gluconeogenesis. The chain is Fructose-1,6-bisphosphatase class 1 from Brucella suis biovar 1 (strain 1330).